The primary structure comprises 125 residues: Small ribosomal subunit protein bS6 (125 aa).

A disordered region spans residues 101–125 (PMMKEEKAKNLLAPQSDAAEPTAAA).

It belongs to the bacterial ribosomal protein bS6 family.

Binds together with bS18 to 16S ribosomal RNA. The polypeptide is Small ribosomal subunit protein bS6 (Laribacter hongkongensis (strain HLHK9)).